Consider the following 455-residue polypeptide: MNHSEARGSGGHKGYRGRSQASEQWVPVAADDKSLEDSSGNRVRGSQGKGRSRTSWSPRNSYGRGNDEHSPVQAYVNKSNVGFVEKGVQQDRKSLEDGIGSTKQPDDGAAAGDNKAVLQSKSTNVSGGSFVSSECEDKDGAKMYCDLVNRVNDVTLSCQESVSSTVVQKVELSSVEDQKSAPKADGAGNSSNESSTRHFDIFLEKKGIVLKPNLLVLSREKKKAAKGYSGTVIRPGMVLLKNYLSINDQVMIVNKCRRLGLGEGGFYQPGYRDEAKLHLKMMCLGKNWDPETSRYGETRPFDGSTAPRIPAEFNQFVEKAVKESQSLAASNSKQTKGGDEIPFMLPDICIVNFYSSTGRLGLHQDKDESENSIRKGLPVVSFSIGDSAEFLYGDQRDEDKAETLTLESGDVLLFGGRSRKVFHGVRSIRKDTAPKALLQETSLRPGRLNLTFRQY.

Disordered stretches follow at residues 1–114 (MNHS…AGDN) and 173–194 (SSVEDQKSAPKADGAGNSSNES). The 111-residue stretch at 345-455 (LPDICIVNFY…GRLNLTFRQY (111 aa)) folds into the Fe2OG dioxygenase domain. 2-oxoglutarate is bound at residue 352–354 (NFY). Residues histidine 363, aspartate 365, and histidine 423 each coordinate Fe cation. A 2-oxoglutarate-binding site is contributed by 447–453 (RLNLTFR).

The protein belongs to the alkB family. It depends on Fe(2+) as a cofactor. As to expression, expressed at low levels in roots and seedlings, but barely in cauline leaves, rosette leaves, stems, siliques and flowers.

Its subcellular location is the nucleus. It is found in the cytoplasm. It carries out the reaction an N(6)-methyl-2'-deoxyadenosine in DNA + 2-oxoglutarate + O2 = a 2'-deoxyadenosine in DNA + formaldehyde + succinate + CO2. Its function is as follows. Dioxygenase that catalyzes DNA N(6)-methyladenine (6 mA) demethylation with a low efficiency. The polypeptide is DNA N(6)-methyladenine demethylase ALKBH1C (Arabidopsis thaliana (Mouse-ear cress)).